A 396-amino-acid polypeptide reads, in one-letter code: S-adenosylmethionine synthase (396 aa).

His-14 contributes to the ATP binding site. Asp-16 is a binding site for Mg(2+). Glu-42 is a K(+) binding site. L-methionine is bound by residues Glu-55 and Gln-98. The tract at residues 98 to 108 is flexible loop; the sequence is QSPDIAMGVDK. ATP contacts are provided by residues 174 to 176, 240 to 241, Asp-249, 255 to 256, Ala-272, and Lys-276; these read DGK, RF, and RK. Asp-249 contacts L-methionine. Lys-280 contributes to the L-methionine binding site.

The protein belongs to the AdoMet synthase family. As to quaternary structure, homotetramer; dimer of dimers. It depends on Mg(2+) as a cofactor. K(+) serves as cofactor.

Its subcellular location is the cytoplasm. It carries out the reaction L-methionine + ATP + H2O = S-adenosyl-L-methionine + phosphate + diphosphate. The protein operates within amino-acid biosynthesis; S-adenosyl-L-methionine biosynthesis; S-adenosyl-L-methionine from L-methionine: step 1/1. Its function is as follows. Catalyzes the formation of S-adenosylmethionine (AdoMet) from methionine and ATP. The overall synthetic reaction is composed of two sequential steps, AdoMet formation and the subsequent tripolyphosphate hydrolysis which occurs prior to release of AdoMet from the enzyme. The protein is S-adenosylmethionine synthase of Caldicellulosiruptor saccharolyticus (strain ATCC 43494 / DSM 8903 / Tp8T 6331).